Reading from the N-terminus, the 118-residue chain is Large ribosomal subunit protein bL20 (118 aa).

Belongs to the bacterial ribosomal protein bL20 family.

In terms of biological role, binds directly to 23S ribosomal RNA and is necessary for the in vitro assembly process of the 50S ribosomal subunit. It is not involved in the protein synthesizing functions of that subunit. The sequence is that of Large ribosomal subunit protein bL20 from Alteromonas mediterranea (strain DSM 17117 / CIP 110805 / LMG 28347 / Deep ecotype).